The following is a 277-amino-acid chain: Energy-coupling factor transporter ATP-binding protein EcfA (277 aa).

The 235-residue stretch at 4–238 (LETRDLTHIY…PELLTQTRLD (235 aa)) folds into the ABC transporter domain. Residue 37-44 (GPNGAGKS) coordinates ATP.

This sequence belongs to the ABC transporter superfamily. Energy-coupling factor EcfA family. Forms a stable energy-coupling factor (ECF) transporter complex composed of 2 membrane-embedded substrate-binding proteins (S component), 2 ATP-binding proteins (A component) and 2 transmembrane proteins (T component).

Its subcellular location is the cell membrane. Functionally, ATP-binding (A) component of a common energy-coupling factor (ECF) ABC-transporter complex. Unlike classic ABC transporters this ECF transporter provides the energy necessary to transport a number of different substrates. In Methanoculleus marisnigri (strain ATCC 35101 / DSM 1498 / JR1), this protein is Energy-coupling factor transporter ATP-binding protein EcfA.